Here is a 130-residue protein sequence, read N- to C-terminus: Small ribosomal subunit protein uS11 (130 aa).

The protein belongs to the universal ribosomal protein uS11 family. In terms of assembly, part of the 30S ribosomal subunit. Interacts with proteins S7 and S18. Binds to IF-3.

Functionally, located on the platform of the 30S subunit, it bridges several disparate RNA helices of the 16S rRNA. Forms part of the Shine-Dalgarno cleft in the 70S ribosome. This chain is Small ribosomal subunit protein uS11, found in Prochlorococcus marinus (strain MIT 9301).